The chain runs to 1094 residues: Isoleucine--tRNA ligase (1094 aa).

The 'HIGH' region motif lies at 53–63; it reads PFANGLPHYGH. The 'KMSKS' region motif lies at 624–628; it reads KLSKR. Lys627 lines the ATP pocket.

Belongs to the class-I aminoacyl-tRNA synthetase family. IleS type 2 subfamily. As to quaternary structure, monomer. The cofactor is Zn(2+).

The protein resides in the cytoplasm. It carries out the reaction tRNA(Ile) + L-isoleucine + ATP = L-isoleucyl-tRNA(Ile) + AMP + diphosphate. Its function is as follows. Catalyzes the attachment of isoleucine to tRNA(Ile). As IleRS can inadvertently accommodate and process structurally similar amino acids such as valine, to avoid such errors it has two additional distinct tRNA(Ile)-dependent editing activities. One activity is designated as 'pretransfer' editing and involves the hydrolysis of activated Val-AMP. The other activity is designated 'posttransfer' editing and involves deacylation of mischarged Val-tRNA(Ile). In Rickettsia felis (strain ATCC VR-1525 / URRWXCal2) (Rickettsia azadi), this protein is Isoleucine--tRNA ligase.